We begin with the raw amino-acid sequence, 89 residues long: Small ribosomal subunit protein uS15 (89 aa).

It belongs to the universal ribosomal protein uS15 family. Part of the 30S ribosomal subunit. Forms a bridge to the 50S subunit in the 70S ribosome, contacting the 23S rRNA.

One of the primary rRNA binding proteins, it binds directly to 16S rRNA where it helps nucleate assembly of the platform of the 30S subunit by binding and bridging several RNA helices of the 16S rRNA. Functionally, forms an intersubunit bridge (bridge B4) with the 23S rRNA of the 50S subunit in the ribosome. The polypeptide is Small ribosomal subunit protein uS15 (Rhizobium rhizogenes (strain K84 / ATCC BAA-868) (Agrobacterium radiobacter)).